We begin with the raw amino-acid sequence, 699 residues long: Zinc finger protein 782 (699 aa).

One can recognise a KRAB domain in the interval 8–79 (VSFQDVTVEF…EKEKGFLSRN (72 aa)). The interval 75–95 (FLSRNSPEDSQPDEISEKSPE) is disordered. The C2H2-type 1; degenerate zinc-finger motif lies at 279–307 (CFCRITHKTLTGGKSFSQKSHIREHHRVH). The C2H2-type 2; degenerate zinc-finger motif lies at 316–332 (GKSFNRNSTLPVHQRTH). Residues 337–360 (YSDYHPCTETFSYQSTFSVHQKVH) form a C2H2-type 3; degenerate zinc finger. A C2H2-type 4; degenerate zinc finger spans residues 366-388 (YEYNECGKSCSMNSHLIWPQKSH). 11 consecutive C2H2-type zinc fingers follow at residues 394–416 (YECP…QRTH), 422–444 (YKCD…QRTH), 450–472 (FECH…QRTH), 478–500 (FECN…RRTH), 506–528 (YKCD…HRTH), 534–556 (YKCN…HRIH), 562–584 (YKCN…HRTH), 590–612 (YQCE…QRTH), 618–640 (YECN…QRTH), 646–668 (YNCN…QRTH), and 674–696 (YKCD…QKAH).

It belongs to the krueppel C2H2-type zinc-finger protein family.

It is found in the nucleus. May be involved in transcriptional regulation. This Homo sapiens (Human) protein is Zinc finger protein 782 (ZNF782).